The sequence spans 75 residues: Cytochrome c oxidase subunit 6C (75 aa).

Residues 1-13 (MASEVLAKPQMRG) lie on the Mitochondrial matrix side of the membrane. The helical transmembrane segment at 14 to 54 (LLARRLRIHMVGAFLISLGVAALYKFGVAEPRKKAYADFYK) threads the bilayer. Over 55–75 (NYSPEKDFEEMKKAGVFRSIK) the chain is Mitochondrial intermembrane.

This sequence belongs to the cytochrome c oxidase subunit 6c family. As to quaternary structure, component of the cytochrome c oxidase (complex IV, CIV), a multisubunit enzyme composed of 14 subunits. The complex is composed of a catalytic core of 3 subunits MT-CO1, MT-CO2 and MT-CO3, encoded in the mitochondrial DNA, and 11 supernumerary subunits COX4I, COX5A, COX5B, COX6A, COX6B, COX6C, COX7A, COX7B, COX7C, COX8 and NDUFA4, which are encoded in the nuclear genome. The complex exists as a monomer or a dimer and forms supercomplexes (SCs) in the inner mitochondrial membrane with NADH-ubiquinone oxidoreductase (complex I, CI) and ubiquinol-cytochrome c oxidoreductase (cytochrome b-c1 complex, complex III, CIII), resulting in different assemblies (supercomplex SCI(1)III(2)IV(1) and megacomplex MCI(2)III(2)IV(2)).

The protein localises to the mitochondrion inner membrane. Its pathway is energy metabolism; oxidative phosphorylation. Functionally, component of the cytochrome c oxidase, the last enzyme in the mitochondrial electron transport chain which drives oxidative phosphorylation. The respiratory chain contains 3 multisubunit complexes succinate dehydrogenase (complex II, CII), ubiquinol-cytochrome c oxidoreductase (cytochrome b-c1 complex, complex III, CIII) and cytochrome c oxidase (complex IV, CIV), that cooperate to transfer electrons derived from NADH and succinate to molecular oxygen, creating an electrochemical gradient over the inner membrane that drives transmembrane transport and the ATP synthase. Cytochrome c oxidase is the component of the respiratory chain that catalyzes the reduction of oxygen to water. Electrons originating from reduced cytochrome c in the intermembrane space (IMS) are transferred via the dinuclear copper A center (CU(A)) of subunit 2 and heme A of subunit 1 to the active site in subunit 1, a binuclear center (BNC) formed by heme A3 and copper B (CU(B)). The BNC reduces molecular oxygen to 2 water molecules using 4 electrons from cytochrome c in the IMS and 4 protons from the mitochondrial matrix. This is Cytochrome c oxidase subunit 6C (COX6C) from Saimiri sciureus (Common squirrel monkey).